A 533-amino-acid polypeptide reads, in one-letter code: NEDD8-activating enzyme E1 regulatory subunit (533 aa).

Residues 330-343 (DMIADSDKFIKLQN) are interaction with uba3.

The protein belongs to the ubiquitin-activating E1 family. ULA1 subfamily. In terms of assembly, heterodimer of uba3 and nae1. The complex binds nedd8 and ube2m.

The protein operates within protein modification; protein neddylation. Regulatory subunit of the dimeric uba3-nae1 E1 enzyme. E1 activates nedd8 by first adenylating its C-terminal glycine residue with ATP, thereafter linking this residue to the side chain of the catalytic cysteine, yielding a nedd8-uba3 thioester and free AMP. E1 finally transfers nedd8 to the catalytic cysteine of ube2m. The covalent attachment of nedd8 to target proteins is known as 'neddylation' and the process is involved in the regulation of cell growth, viability and development. The chain is NEDD8-activating enzyme E1 regulatory subunit (nae1) from Danio rerio (Zebrafish).